A 269-amino-acid chain; its full sequence is Ribosomal RNA large subunit methyltransferase E (269 aa).

5 residues coordinate S-adenosyl-L-methionine: Gly48, Trp50, Asp68, Asp86, and Asp111. Lys151 acts as the Proton acceptor in catalysis. The 59-residue stretch at 198 to 256 (PVAAGDRIEVTVEERGDEGDGIAYVEGYSIFVSDADVGETVTVEVVDAKPRFGFATRVD) folds into the TRAM domain.

This sequence belongs to the class I-like SAM-binding methyltransferase superfamily. RNA methyltransferase RlmE family.

It localises to the cytoplasm. The enzyme catalyses uridine(2552) in 23S rRNA + S-adenosyl-L-methionine = 2'-O-methyluridine(2552) in 23S rRNA + S-adenosyl-L-homocysteine + H(+). Functionally, specifically methylates the uridine in position 2552 of 23S rRNA at the 2'-O position of the ribose in the fully assembled 50S ribosomal subunit. In Halorubrum lacusprofundi (strain ATCC 49239 / DSM 5036 / JCM 8891 / ACAM 34), this protein is Ribosomal RNA large subunit methyltransferase E.